Consider the following 427-residue polypeptide: uncharacterized protein (427 aa).

The protein belongs to the MG032/MG096/MG288 family.

This is an uncharacterized protein from Mycoplasma pneumoniae (strain ATCC 29342 / M129 / Subtype 1) (Mycoplasmoides pneumoniae).